The chain runs to 411 residues: Common plant regulatory factor 1 (411 aa).

The segment covering 1–14 (MGNTDDVKAVKPEK) has biased composition (basic and acidic residues). Disordered regions lie at residues 1-30 (MGNT…SNSH), 130-197 (AMSI…SSVI), and 232-293 (SSLE…KQAE). Residues 148-164 (TLSQSKETEGSSDGSNE) are compositionally biased toward polar residues. Residues 235 to 244 (ELKDSPKEHA) are compositionally biased toward basic and acidic residues. The segment covering 249-259 (AGGQQPSTMMP) has biased composition (polar residues). Basic and acidic residues predominate over residues 264-293 (LHNDRDLKRERRKQSNRESARRSRLRKQAE). The region spanning 269–332 (DLKRERRKQS…EKLTNDNSRL (64 aa)) is the bZIP domain. The tract at residues 271-290 (KRERRKQSNRESARRSRLRK) is basic motif. The segment at 297-332 (LAIKVDSLTAENMALKAEINRLTLTAEKLTNDNSRL) is leucine-zipper. A disordered region spans residues 346 to 411 (DVGLGNNNEK…NPRTDAVAAG (66 aa)).

The protein belongs to the bZIP family. As to quaternary structure, binds DNA as a dimer.

It localises to the nucleus. Binds to the G-box-like motif (5'-ACGTGGC-3') of the chalcone synthase (CHS) gene promoter. G-box and G-box-like motifs are defined in promoters of certain plant genes which are regulated by such diverse stimuli as light-induction or hormone control. In Petroselinum crispum (Parsley), this protein is Common plant regulatory factor 1 (CPRF1).